A 130-amino-acid polypeptide reads, in one-letter code: MNDPLGDMLTRIRNAQLRGKSTVSTPASRLRAWVLDVLQAEGYIRGYEKKETENGQGELVISLKYFEGTPVIRELKRVSKPGRRVYMATKDLPSVRNGLGVSIISTPKGVMSDASARSANVGGEVLCTVF.

The protein belongs to the universal ribosomal protein uS8 family. As to quaternary structure, part of the 30S ribosomal subunit. Contacts proteins S5 and S12.

In terms of biological role, one of the primary rRNA binding proteins, it binds directly to 16S rRNA central domain where it helps coordinate assembly of the platform of the 30S subunit. The polypeptide is Small ribosomal subunit protein uS8 (Cereibacter sphaeroides (strain KD131 / KCTC 12085) (Rhodobacter sphaeroides)).